The sequence spans 579 residues: Glutamine--tRNA ligase (579 aa).

Positions 41–51 match the 'HIGH' region motif; sequence PEPNGYLHIGH. ATP contacts are provided by residues 42 to 44 and 48 to 54; these read EPN and HIGHAKA. Positions 74 and 218 each coordinate L-glutamine. ATP-binding positions include T237, 285 to 286, and 293 to 295; these read RL and MSK. The short motif at 292–296 is the 'KMSKS' region element; the sequence is VMSKR.

This sequence belongs to the class-I aminoacyl-tRNA synthetase family. Monomer.

The protein resides in the cytoplasm. It carries out the reaction tRNA(Gln) + L-glutamine + ATP = L-glutaminyl-tRNA(Gln) + AMP + diphosphate. The protein is Glutamine--tRNA ligase of Xanthomonas euvesicatoria pv. vesicatoria (strain 85-10) (Xanthomonas campestris pv. vesicatoria).